Here is a 147-residue protein sequence, read N- to C-terminus: MTEGLFISCSAVRVKPNRRAGLRRRSPAFLLSANQKTRLFALGSSPRCGPRANGEEASSCAWVSRAPRAACARAKPASRAPEGPVSRKTRGGEAALASARPATDCLRSGLAVERRRKPNSRPAPGVGSLPGSRPQDPQGAAGRRLSP.

Low complexity predominate over residues 72–81; that stretch reads ARAKPASRAP. A disordered region spans residues 72 to 147; sequence ARAKPASRAP…QGAAGRRLSP (76 aa).

This is an uncharacterized protein from Homo sapiens (Human).